The primary structure comprises 1641 residues: Ophiophagus venom factor (1641 aa).

The N-terminal stretch at 1–22 is a signal peptide; the sequence is MEGMALYLVAALLIGFPGSSHG. 2 N-linked (GlcNAc...) asparagine glycosylation sites follow: N181 and N209. Mg(2+) is bound by residues P507, D530, V531, and D533. 12 disulfides stabilise this stretch: C535–C796, C604–C639, C672–C699, C673–C706, C686–C707, C852–C1491, C1336–C1467, C1367–C1436, C1484–C1489, C1496–C1568, C1515–C1639, and C1615–C1624. The propeptide occupies 645–728; the sequence is RRRRSSVLLL…WESGLFLPRN (84 aa). Residues 649 to 727 form a C3a-like domain region; the sequence is SSVLLLDSKA…QWESGLFLPR (79 aa). In terms of domain architecture, Anaphylatoxin-like spans 672–707; the sequence is CCEDSMHENPMGYTCEKRAKYIQEGDACKAAFLECC. Residues 731 to 742 are factor B binding site; it reads EDGFIQDSDIIP. The propeptide occupies 981–1259; it reads HLIITPSGCG…VMLFQALAEY (279 aa). Residues 981 to 1259 are C3d-like domain; sequence HLIITPSGCG…VMLFQALAEY (279 aa). Residues 989–992 constitute a cross-link (isoglutamyl cysteine thioester (Cys-Gln)); that stretch reads CGEQ. The tract at residues 1186–1249 is factor H binding site; it reads VLMAASTGKN…GGTYGQTQAT (64 aa). An NTR domain is found at 1496-1639; that stretch reads CSLLSQQEKI…LSNILTIFGC (144 aa).

Belongs to the venom complement C3 homolog family. As to quaternary structure, heterotrimer of alpha, beta and gamma chains; disulfide-linked. May be active with factor B in the presence of factor D. Post-translationally, first processed by the removal of 4 Arg residues by furin-type protease, forming two chains, alpha and gamma/beta precursor, linked by a disulfide bond. Probably, a cobrin-like protease cleaves the C3a-like domain and then the C3d-like domain, generating the mature venom factor (OVF). In terms of processing, the beta chain is not glycosylated. As to expression, expressed by the venom gland.

It is found in the secreted. Complement-activating protein in cobra venom. It is a structural and functional analog of complement component C3b, the activated form of C3. It binds factor B (CFB), which is subsequently cleaved by factor D (CFD) to form the bimolecular complex OVF/Bb. OVF/Bb is a C3/C5 convertase that cleaves both complement components C3 and C5. Structurally, it resembles the C3b degradation product C3c, which is not able to form a C3/C5 convertase. Unlike C3b/Bb, OVF/Bb is a stable complex and completely resistant to the actions of complement regulatory factors H (CFH) and I (CFI). Therefore, OVF continuously activates complement. As a result, OVF exhibits complement-depleting activity. The sequence is that of Ophiophagus venom factor from Ophiophagus hannah (King cobra).